A 363-amino-acid chain; its full sequence is Glutamate--cysteine ligase (363 aa).

Belongs to the glutamate--cysteine ligase type 2 family. YbdK subfamily.

It carries out the reaction L-cysteine + L-glutamate + ATP = gamma-L-glutamyl-L-cysteine + ADP + phosphate + H(+). In terms of biological role, catalyzes the synthesis of gamma-glutamylcysteine (gamma-GC), the main low-molecular-weight thiol compound instead of glutathione in halophilic archaea. This chain is Glutamate--cysteine ligase, found in Haloquadratum walsbyi (strain DSM 16790 / HBSQ001).